The chain runs to 223 residues: Killer cell lectin-like receptor subfamily B member 1B allele A (223 aa).

The Cytoplasmic portion of the chain corresponds to Met1 to Cys45. The ITIM motif signature appears at Val5–Leu10. The LCK-binding motif signature appears at Cys31–Pro34. A helical; Signal-anchor for type II membrane protein transmembrane segment spans residues Ala46–Leu66. At Gln67–Ser223 the chain is on the extracellular side. Residues His101–Gln211 form the C-type lectin domain. Intrachain disulfides connect Cys122/Cys210 and Cys189/Cys202.

As to quaternary structure, homodimer; disulfide-linked. Interacts with tyrosine kinase LCK. Binds PTPN6/SHP-1 in a phosphorylation-dependent manner. Expressed in a subset of natural killer cells.

It is found in the membrane. Functionally, receptor for CLEC2D/OCIL. Ligand-binding contributes to inhibition of cytotoxic natural killer (NK) cells. May mediate MHC class I-independent 'missing-self' recognition of allografts, tumor cells and virus-infected cells. This chain is Killer cell lectin-like receptor subfamily B member 1B allele A, found in Rattus norvegicus (Rat).